The chain runs to 123 residues: Small ribosomal subunit protein uS12 (123 aa).

3-methylthioaspartic acid is present on aspartate 89.

It belongs to the universal ribosomal protein uS12 family. As to quaternary structure, part of the 30S ribosomal subunit. Contacts proteins S8 and S17. May interact with IF1 in the 30S initiation complex.

With S4 and S5 plays an important role in translational accuracy. Its function is as follows. Interacts with and stabilizes bases of the 16S rRNA that are involved in tRNA selection in the A site and with the mRNA backbone. Located at the interface of the 30S and 50S subunits, it traverses the body of the 30S subunit contacting proteins on the other side and probably holding the rRNA structure together. The combined cluster of proteins S8, S12 and S17 appears to hold together the shoulder and platform of the 30S subunit. The sequence is that of Small ribosomal subunit protein uS12 from Bartonella bacilliformis (strain ATCC 35685 / KC583 / Herrer 020/F12,63).